We begin with the raw amino-acid sequence, 100 residues long: Apolipoprotein C-II (100 aa).

Positions 1–22 (MDSRFLLALFLVLLVLGCEVQA) are cleaved as a signal peptide. Residues 66–74 (SVDEKLRDM) are lipid binding. The segment at 78 to 100 (SSAAMTTYAIIFTDQILTLLKGE) is lipoprotein lipase cofactor.

This sequence belongs to the apolipoprotein C2 family. Post-translationally, proapolipoprotein C-II is synthesized as a sialic acid containing glycoprotein which is subsequently desialylated prior to its proteolytic processing. In terms of processing, proapolipoprotein C-II, the major form found in plasma undergoes proteolytic cleavage of its N-terminal hexapeptide to generate the mature form apolipoprotein C-II, which occurs as the minor form in plasma.

It is found in the secreted. Component of chylomicrons, very low-density lipoproteins (VLDL), low-density lipoproteins (LDL), and high-density lipoproteins (HDL) in plasma. Plays an important role in lipoprotein metabolism as an activator of lipoprotein lipase. The polypeptide is Apolipoprotein C-II (APOC2) (Myodes glareolus (Bank vole)).